A 316-amino-acid chain; its full sequence is Methionyl-tRNA formyltransferase (316 aa).

Residue 112–115 (SLLP) coordinates (6S)-5,6,7,8-tetrahydrofolate.

The protein belongs to the Fmt family.

It catalyses the reaction L-methionyl-tRNA(fMet) + (6R)-10-formyltetrahydrofolate = N-formyl-L-methionyl-tRNA(fMet) + (6S)-5,6,7,8-tetrahydrofolate + H(+). Its function is as follows. Attaches a formyl group to the free amino group of methionyl-tRNA(fMet). The formyl group appears to play a dual role in the initiator identity of N-formylmethionyl-tRNA by promoting its recognition by IF2 and preventing the misappropriation of this tRNA by the elongation apparatus. The chain is Methionyl-tRNA formyltransferase from Glaesserella parasuis serovar 5 (strain SH0165) (Haemophilus parasuis).